The chain runs to 427 residues: Kallistatin (427 aa).

An N-terminal signal peptide occupies residues 1 to 20; sequence MHLIDYLLLLLVGLLALSHG. N-linked (GlcNAc...) asparagine glycans are attached at residues asparagine 33, asparagine 108, asparagine 157, and asparagine 238.

Belongs to the serpin family. In terms of assembly, monomer and some homodimers.

The protein resides in the secreted. Its function is as follows. Inhibits human amidolytic and kininogenase activities of tissue kallikrein. In Pongo abelii (Sumatran orangutan), this protein is Kallistatin (SERPINA4).